The sequence spans 383 residues: RNA-binding motif, single-stranded-interacting protein 2 (383 aa).

Met-1 carries the N-acetylmethionine modification. The interval Gln-28–Ser-56 is disordered. Gly residues predominate over residues Ser-42 to Gly-51. RRM domains are found at residues Thr-58 to Gln-131 and Thr-137 to Gly-222. Position 108 is a phosphoserine (Ser-108). Residue Ser-287 is modified to Phosphoserine. A disordered region spans residues Ser-352 to Lys-383.

Its subcellular location is the nucleus. The sequence is that of RNA-binding motif, single-stranded-interacting protein 2 (Rbms2) from Mus musculus (Mouse).